The sequence spans 111 residues: UPF0060 membrane protein Krad_3114 (111 aa).

A run of 4 helical transmembrane segments spans residues 7 to 27 (IALF…VWQG), 33 to 53 (GLAW…AATL), 62 to 82 (VLAA…AVVD), and 88 to 108 (RFDV…MYAP).

The protein belongs to the UPF0060 family.

It is found in the cell membrane. This Kineococcus radiotolerans (strain ATCC BAA-149 / DSM 14245 / SRS30216) protein is UPF0060 membrane protein Krad_3114.